Reading from the N-terminus, the 304-residue chain is HTH-type transcriptional regulator TtuA (304 aa).

The region spanning 1 to 58 is the HTH lysR-type domain; it reads MELEQLKCFVAAAEELHFGRAAQKMGILPASLGRHLRLLEESLGTRLMSRTTRSVALT. The H-T-H motif DNA-binding region spans 18–37; it reads FGRAAQKMGILPASLGRHLR.

It belongs to the LysR transcriptional regulatory family.

Transcriptional regulator of the ttuABCDE tartrate utilization operon. This Agrobacterium vitis (Rhizobium vitis) protein is HTH-type transcriptional regulator TtuA (ttuA).